The following is a 1140-amino-acid chain: Squamosa promoter-binding-like protein 15 (1140 aa).

2 disordered regions span residues 73–112 and 124–177; these read RVNA…LNLQ and DVSP…GGNS. Composition is skewed to low complexity over residues 76 to 100 and 125 to 135; these read AGLS…EALR and VSPAATTVSSS. A compositionally biased stretch (gly residues) spans 164 to 177; that stretch reads ASGGGGGGGGGGNS. An SBP-type zinc finger spans residues 184 to 261; sequence YPMCQVDDCR…AGHNRRRRKT (78 aa). Zn(2+) contacts are provided by cysteine 187, cysteine 192, cysteine 209, histidine 212, cysteine 228, cysteine 231, histidine 235, and cysteine 247. The Bipartite nuclear localization signal signature appears at 244-260; it reads KRSCRRRLAGHNRRRRK. 4 disordered regions span residues 327–382, 403–472, 496–517, and 558–597; these read NNGN…ADGF, TSNP…TPPY, LSSE…PVTH, and KDSE…DGQD. The segment covering 345–375 has biased composition (polar residues); that stretch reads ASHSQQQDSVQRTTNGFEKQTNGLDKQTNGF. The span at 403–430 shows a compositional bias: low complexity; sequence TSNPDSNTSQSQGSSDSSGNNKSKSQST. Residues 450-466 are compositionally biased toward basic and acidic residues; that stretch reads RKNDALERSPEMYKQPD. Over residues 496 to 514 the composition is skewed to polar residues; sequence LSSESSNPLDERSPSSSPP. Residues 579-593 are compositionally biased toward low complexity; it reads TSTSCSDHSPSTSNS.

In terms of tissue distribution, expressed in stems, leaf sheaths, and young panicles.

The protein resides in the nucleus. Functionally, trans-acting factor that binds specifically to the consensus nucleotide sequence 5'-TNCGTACAA-3'. The protein is Squamosa promoter-binding-like protein 15 (SPL15) of Oryza sativa subsp. indica (Rice).